The chain runs to 369 residues: S-adenosylmethionine:tRNA ribosyltransferase-isomerase (369 aa).

It belongs to the QueA family. Monomer.

Its subcellular location is the cytoplasm. It catalyses the reaction 7-aminomethyl-7-carbaguanosine(34) in tRNA + S-adenosyl-L-methionine = epoxyqueuosine(34) in tRNA + adenine + L-methionine + 2 H(+). The protein operates within tRNA modification; tRNA-queuosine biosynthesis. In terms of biological role, transfers and isomerizes the ribose moiety from AdoMet to the 7-aminomethyl group of 7-deazaguanine (preQ1-tRNA) to give epoxyqueuosine (oQ-tRNA). The polypeptide is S-adenosylmethionine:tRNA ribosyltransferase-isomerase (Acaryochloris marina (strain MBIC 11017)).